We begin with the raw amino-acid sequence, 85 residues long: Putative sodium channel toxin Ts37 (85 aa).

An N-terminal signal peptide occupies residues 1-20 (MAGEWACLLVSLVLLWGAAG). The LCN-type CS-alpha/beta domain maps to 22 to 83 (RDGFLLDRNF…KIWGDSVRCR (62 aa)). 4 disulfide bridges follow: Cys32/Cys82, Cys36/Cys59, Cys45/Cys64, and Cys49/Cys66.

The protein belongs to the long (4 C-C) scorpion toxin superfamily. Sodium channel inhibitor family. In terms of tissue distribution, expressed by the venom gland.

Its subcellular location is the secreted. Putative sodium channel toxin. This Tityus serrulatus (Brazilian scorpion) protein is Putative sodium channel toxin Ts37.